Consider the following 118-residue polypeptide: Large ribosomal subunit protein bL17 (118 aa).

The protein belongs to the bacterial ribosomal protein bL17 family. Part of the 50S ribosomal subunit. Contacts protein L32.

The chain is Large ribosomal subunit protein bL17 from Gemmatimonas aurantiaca (strain DSM 14586 / JCM 11422 / NBRC 100505 / T-27).